The primary structure comprises 336 residues: Serpentine receptor class gamma-13 (336 aa).

Transmembrane regions (helical) follow at residues 32-52 (LKYIIQVTLLSINFILNFLII), 68-88 (FFIIYAADLIMGMYMSLSEIL), 93-113 (FIYVTLLCPILAPYFFTPSIF), 133-153 (VFLSFNRMTCVVFPVGYSAIW), 156-176 (ILTPIIIVLFVLPIGIIWNVL), 210-230 (FIVSLILIIVISGVTLYALLI), 246-266 (TMVLSLEFSFLSVIQIYFAFF), and 277-297 (LLRVMYFTYDLLNFSTTIIFI).

This sequence belongs to the nematode receptor-like protein srg family.

Its subcellular location is the membrane. The chain is Serpentine receptor class gamma-13 (srg-13) from Caenorhabditis elegans.